The sequence spans 431 residues: Gamma-glutamyl phosphate reductase (431 aa).

The protein belongs to the gamma-glutamyl phosphate reductase family.

It localises to the cytoplasm. It catalyses the reaction L-glutamate 5-semialdehyde + phosphate + NADP(+) = L-glutamyl 5-phosphate + NADPH + H(+). The protein operates within amino-acid biosynthesis; L-proline biosynthesis; L-glutamate 5-semialdehyde from L-glutamate: step 2/2. Catalyzes the NADPH-dependent reduction of L-glutamate 5-phosphate into L-glutamate 5-semialdehyde and phosphate. The product spontaneously undergoes cyclization to form 1-pyrroline-5-carboxylate. This chain is Gamma-glutamyl phosphate reductase, found in Bifidobacterium longum subsp. infantis (strain ATCC 15697 / DSM 20088 / JCM 1222 / NCTC 11817 / S12).